Consider the following 426-residue polypeptide: tRNA(Ile)-lysidine synthase (426 aa).

Residue 19-24 (SGGLDS) coordinates ATP.

Belongs to the tRNA(Ile)-lysidine synthase family.

The protein localises to the cytoplasm. It carries out the reaction cytidine(34) in tRNA(Ile2) + L-lysine + ATP = lysidine(34) in tRNA(Ile2) + AMP + diphosphate + H(+). Its function is as follows. Ligates lysine onto the cytidine present at position 34 of the AUA codon-specific tRNA(Ile) that contains the anticodon CAU, in an ATP-dependent manner. Cytidine is converted to lysidine, thus changing the amino acid specificity of the tRNA from methionine to isoleucine. The sequence is that of tRNA(Ile)-lysidine synthase from Neisseria meningitidis serogroup A / serotype 4A (strain DSM 15465 / Z2491).